The chain runs to 649 residues: Lipoteichoic acid synthase 2 (649 aa).

Topologically, residues M1–G9 are cytoplasmic. The chain crosses the membrane as a helical span at residues L10–L30. Over N31–K42 the chain is Extracellular. Residues I43 to F63 traverse the membrane as a helical segment. Over K64–Q69 the chain is Cytoplasmic. Residues T70 to Y90 traverse the membrane as a helical segment. Over R91 to S118 the chain is Extracellular. Residues L119–I139 form a helical membrane-spanning segment. Over K140–K151 the chain is Cytoplasmic. A helical membrane pass occupies residues S152–E172. Residues S173 to K649 are Extracellular-facing. Positions 253 and 297 each coordinate Mn(2+). T297 is an active-site residue. H412 contributes to the substrate binding site. Residues D471 and H472 each coordinate Mn(2+). The tract at residues F622 to K649 is disordered. Basic and acidic residues predominate over residues D631–K649.

The protein belongs to the LTA synthase family. Proteolytically cleaved.

The protein resides in the cell membrane. It is found in the secreted. It participates in cell wall biogenesis; lipoteichoic acid biosynthesis. Functionally, catalyzes the polymerization of lipoteichoic acid (LTA) polyglycerol phosphate, a reaction that presumably uses phosphatidylglycerol (PG) as substrate. In Bacillus subtilis (strain 168), this protein is Lipoteichoic acid synthase 2 (ltaS2).